The chain runs to 406 residues: MSELLATYVLTHREDEQVNRKAEQIALGLTVGSWTDLPQLKKEQLQKHKGRVEKVTEKFAPAENGLYQSEVTIAYPEANFSADIPAVLSTIFGKLSLDGKVKLVDIQFSDRFKKSLPGPVFGIDGIRKKTGVFDRPLLMSIFKGVIGRDMTDLKEQLRLQALGGVDFIKDDEILFESPLAPFEDRIKEGKKILKETYEETGHRTLYAVHLTGRTFELRDRARKAAELGADALLFNVFAYGLDVMQSLAEDPDIRLPIMAHPAVSGALTSSPEYGFSHSLLLGKLNRYAGADLSLFPSPYGSVALPKKDAFGIYEACVKEDSVQKTFPVPSAGIHPGMVPVLMKDFGLDHVINAGGGIHGHPRGAIGGGKAFRSIIDAVIHGESIQEKTASCQDLKAALELWGRVVE.

The active-site Proton acceptor is lysine 94. Substrate is bound by residues lysine 143, 169–172 (KDDE), histidine 260, glycine 332, and 354–355 (GG). Mg(2+) is bound by residues lysine 169, aspartate 171, and glutamate 172. Lysine 169 bears the N6-carboxylysine mark.

The protein belongs to the RuBisCO large chain family. Type IV subfamily. As to quaternary structure, homodimer. Mg(2+) serves as cofactor.

It carries out the reaction 5-methylsulfanyl-2,3-dioxopentyl phosphate = 2-hydroxy-5-methylsulfanyl-3-oxopent-1-enyl phosphate. The protein operates within amino-acid biosynthesis; L-methionine biosynthesis via salvage pathway; L-methionine from S-methyl-5-thio-alpha-D-ribose 1-phosphate: step 3/6. In terms of biological role, catalyzes the enolization of 2,3-diketo-5-methylthiopentyl-1-phosphate (DK-MTP-1-P) into 2-hydroxy-3-keto-5-methylthiopentenyl-1-phosphate (HK-MTPenyl-1-P). In Bacillus pumilus (strain SAFR-032), this protein is 2,3-diketo-5-methylthiopentyl-1-phosphate enolase.